We begin with the raw amino-acid sequence, 177 residues long: ATP synthase subunit delta (177 aa).

Belongs to the ATPase delta chain family. As to quaternary structure, F-type ATPases have 2 components, F(1) - the catalytic core - and F(0) - the membrane proton channel. F(1) has five subunits: alpha(3), beta(3), gamma(1), delta(1), epsilon(1). F(0) has three main subunits: a(1), b(2) and c(10-14). The alpha and beta chains form an alternating ring which encloses part of the gamma chain. F(1) is attached to F(0) by a central stalk formed by the gamma and epsilon chains, while a peripheral stalk is formed by the delta and b chains.

It is found in the cell inner membrane. Its function is as follows. F(1)F(0) ATP synthase produces ATP from ADP in the presence of a proton or sodium gradient. F-type ATPases consist of two structural domains, F(1) containing the extramembraneous catalytic core and F(0) containing the membrane proton channel, linked together by a central stalk and a peripheral stalk. During catalysis, ATP synthesis in the catalytic domain of F(1) is coupled via a rotary mechanism of the central stalk subunits to proton translocation. In terms of biological role, this protein is part of the stalk that links CF(0) to CF(1). It either transmits conformational changes from CF(0) to CF(1) or is implicated in proton conduction. This is ATP synthase subunit delta from Psychromonas ingrahamii (strain DSM 17664 / CCUG 51855 / 37).